The primary structure comprises 469 residues: UDP-N-acetylmuramate--L-alanine ligase (469 aa).

Gly123–Thr129 is an ATP binding site.

Belongs to the MurCDEF family.

It is found in the cytoplasm. The enzyme catalyses UDP-N-acetyl-alpha-D-muramate + L-alanine + ATP = UDP-N-acetyl-alpha-D-muramoyl-L-alanine + ADP + phosphate + H(+). Its pathway is cell wall biogenesis; peptidoglycan biosynthesis. Functionally, cell wall formation. The chain is UDP-N-acetylmuramate--L-alanine ligase from Synechococcus sp. (strain CC9605).